A 255-amino-acid polypeptide reads, in one-letter code: Flap endonuclease Xni (255 aa).

Aspartate 105 provides a ligand contact to Mg(2+). The 5'-3' exonuclease domain occupies 163 to 253; sequence QYQMLDFIAL…NLKQFRINPI (91 aa). Residues leucine 172, alanine 173, proline 181, isoleucine 183, and isoleucine 186 each contribute to the K(+) site. The segment at 185 to 190 is interaction with DNA; the sequence is GIGPKS.

The protein belongs to the Xni family. The cofactor is Mg(2+). K(+) serves as cofactor.

Functionally, has flap endonuclease activity. During DNA replication, flap endonucleases cleave the 5'-overhanging flap structure that is generated by displacement synthesis when DNA polymerase encounters the 5'-end of a downstream Okazaki fragment. In Shewanella frigidimarina (strain NCIMB 400), this protein is Flap endonuclease Xni.